The sequence spans 174 residues: Gamma-crystallin E (174 aa).

Beta/gamma crystallin 'Greek key' domains follow at residues 2-40 (GKIT…RVDS) and 41-83 (GCWM…RLIP). Residues 84-87 (HSSS) form a connecting peptide region. 2 Beta/gamma crystallin 'Greek key' domains span residues 88–128 (HRIK…HVME) and 129–171 (GYWV…RRIM).

Belongs to the beta/gamma-crystallin family. As to expression, detected in the superior olivary complex of the auditory hindbrain.

Functionally, crystallins are the dominant structural components of the vertebrate eye lens. The polypeptide is Gamma-crystallin E (Cryge) (Mus musculus (Mouse)).